Here is an 84-residue protein sequence, read N- to C-terminus: Mu-conotoxin-like Cal 12.2b (84 aa).

A signal peptide spans 1–19 (MKLTCVLVVLLLVLPFGDL). The propeptide occupies 20–42 (ITTSNTEDNKRGATPWQNSLKAR). 4 disulfides stabilise this stretch: cysteine 45–cysteine 57, cysteine 52–cysteine 65, cysteine 59–cysteine 70, and cysteine 64–cysteine 76. Tryptophan 72 carries the post-translational modification 6'-bromotryptophan. Proline 77 is subject to 4-hydroxyproline. 6'-bromotryptophan is present on tryptophan 81.

It belongs to the conotoxin O1 superfamily. As to expression, expressed by the venom duct.

It is found in the secreted. Functionally, mu-conotoxins block voltage-gated sodium channels. This toxin reversibly blocks voltage-gated sodium channel in cephalopods, with no alteration in the voltage dependence of sodium conductance or on the kinetics of inactivation. The protein is Mu-conotoxin-like Cal 12.2b of Californiconus californicus (California cone).